The following is a 350-amino-acid chain: ALA-interacting subunit 5 (350 aa).

The tract at residues 1–23 is disordered; that stretch reads MSSTAASSTVGGGGSSEISGVKK. At Ser-2 the chain carries N-acetylserine. A helical membrane pass occupies residues 50-70; sequence VILTFLVAGVVFIPLGVICLF. N-linked (GlcNAc...) asparagine glycans are attached at residues Asn-181 and Asn-231. The chain crosses the membrane as a helical span at residues 304–324; that stretch reads FLGIAYLTVGSICLFLAVTFA.

Belongs to the CDC50/LEM3 family. Interacts with ALA2 and ALA3 in a heterologous system. In terms of tissue distribution, expressed in roots, leaves, stems, flowers and siliques.

The protein localises to the golgi apparatus membrane. The protein resides in the prevacuolar compartment membrane. It is found in the endoplasmic reticulum membrane. Functionally, required for the lipid transport activity of the ALA/ALIS P4-ATPase complex. The protein is ALA-interacting subunit 5 (ALIS5) of Arabidopsis thaliana (Mouse-ear cress).